Consider the following 311-residue polypeptide: Ribosomal RNA small subunit methyltransferase H (311 aa).

Residues 33 to 35, Asp53, Phe77, Asp98, and Gln105 contribute to the S-adenosyl-L-methionine site; that span reads GGH.

This sequence belongs to the methyltransferase superfamily. RsmH family.

It localises to the cytoplasm. It carries out the reaction cytidine(1402) in 16S rRNA + S-adenosyl-L-methionine = N(4)-methylcytidine(1402) in 16S rRNA + S-adenosyl-L-homocysteine + H(+). Functionally, specifically methylates the N4 position of cytidine in position 1402 (C1402) of 16S rRNA. The chain is Ribosomal RNA small subunit methyltransferase H from Thiobacillus denitrificans (strain ATCC 25259 / T1).